The sequence spans 220 residues: 7-cyano-7-deazaguanine synthase (220 aa).

Residue 10–20 (FSGGQDSTTCL) coordinates ATP. Zn(2+) contacts are provided by Cys-186, Cys-195, Cys-198, and Cys-201.

The protein belongs to the QueC family. In terms of assembly, homodimer. It depends on Zn(2+) as a cofactor.

The catalysed reaction is 7-carboxy-7-deazaguanine + NH4(+) + ATP = 7-cyano-7-deazaguanine + ADP + phosphate + H2O + H(+). It participates in purine metabolism; 7-cyano-7-deazaguanine biosynthesis. Catalyzes the ATP-dependent conversion of 7-carboxy-7-deazaguanine (CDG) to 7-cyano-7-deazaguanine (preQ(0)). This Bacillus cereus (strain AH187) protein is 7-cyano-7-deazaguanine synthase.